The following is a 190-amino-acid chain: Transcription antitermination protein NusB (190 aa).

Residues 135-190 (APAPESVAEEADEESSDSAAAASEPTDEGDVSDSPDSSGASDEPAAPSAEIQPTVD) are disordered. The segment covering 141–150 (VAEEADEESS) has biased composition (acidic residues).

It belongs to the NusB family.

Involved in transcription antitermination. Required for transcription of ribosomal RNA (rRNA) genes. Binds specifically to the boxA antiterminator sequence of the ribosomal RNA (rrn) operons. This Bifidobacterium longum (strain DJO10A) protein is Transcription antitermination protein NusB.